Here is a 142-residue protein sequence, read N- to C-terminus: Transcription antitermination protein NusB (142 aa).

Belongs to the NusB family. Monomer or homodimer; in equilibrium, with a preference for the monomer. Dimerization may be employed to package NusB in an inactive form until recruitment into antitermination complexes.

Involved in transcription antitermination. Required for transcription of ribosomal RNA (rRNA) genes. Binds specifically to the boxA antiterminator sequence of the ribosomal RNA (rrn) operons. The chain is Transcription antitermination protein NusB from Thermotoga maritima (strain ATCC 43589 / DSM 3109 / JCM 10099 / NBRC 100826 / MSB8).